Here is a 99-residue protein sequence, read N- to C-terminus: MKTIDPRHYDVIVAPVVTEKATIASEHNKVVFKVASKATKPQIKEAVEKLFDVKVKSVNTLVRKGKTKVFRGQFGSQSDVKRAIVTLEEGHRIDVTTGL.

The protein belongs to the universal ribosomal protein uL23 family. In terms of assembly, part of the 50S ribosomal subunit. Contacts protein L29, and trigger factor when it is bound to the ribosome.

Its function is as follows. One of the early assembly proteins it binds 23S rRNA. One of the proteins that surrounds the polypeptide exit tunnel on the outside of the ribosome. Forms the main docking site for trigger factor binding to the ribosome. The sequence is that of Large ribosomal subunit protein uL23 from Rhodopseudomonas palustris (strain BisB18).